Here is a 660-residue protein sequence, read N- to C-terminus: Threonine--tRNA ligase (660 aa).

The TGS domain maps to 1–49 (MPINEIRVQKGQRYRDAINDKKVIAVKKGDKFLDLDEIAGEDEAVQPVY). A catalytic region spans residues 225–554 (DHRKIIAEMD…LLEHFAGKLP (330 aa)). Residues C318, H369, and H531 each coordinate Zn(2+).

The protein belongs to the class-II aminoacyl-tRNA synthetase family. In terms of assembly, homodimer. The cofactor is Zn(2+).

It localises to the cytoplasm. It catalyses the reaction tRNA(Thr) + L-threonine + ATP = L-threonyl-tRNA(Thr) + AMP + diphosphate + H(+). Catalyzes the attachment of threonine to tRNA(Thr) in a two-step reaction: L-threonine is first activated by ATP to form Thr-AMP and then transferred to the acceptor end of tRNA(Thr). This Thermoplasma volcanium (strain ATCC 51530 / DSM 4299 / JCM 9571 / NBRC 15438 / GSS1) protein is Threonine--tRNA ligase.